The sequence spans 194 residues: Protein GrpE (194 aa).

Positions 1 to 12 (MSSKEQNTPNEQ) are enriched in polar residues. The tract at residues 1 to 39 (MSSKEQNTPNEQASDEIETEQAKNQGADTAAEAADQRDE) is disordered.

Belongs to the GrpE family. As to quaternary structure, homodimer.

It is found in the cytoplasm. Its function is as follows. Participates actively in the response to hyperosmotic and heat shock by preventing the aggregation of stress-denatured proteins, in association with DnaK and GrpE. It is the nucleotide exchange factor for DnaK and may function as a thermosensor. Unfolded proteins bind initially to DnaJ; upon interaction with the DnaJ-bound protein, DnaK hydrolyzes its bound ATP, resulting in the formation of a stable complex. GrpE releases ADP from DnaK; ATP binding to DnaK triggers the release of the substrate protein, thus completing the reaction cycle. Several rounds of ATP-dependent interactions between DnaJ, DnaK and GrpE are required for fully efficient folding. The polypeptide is Protein GrpE (Erwinia tasmaniensis (strain DSM 17950 / CFBP 7177 / CIP 109463 / NCPPB 4357 / Et1/99)).